Here is a 303-residue protein sequence, read N- to C-terminus: Coenzyme PQQ synthesis protein B (303 aa).

It belongs to the PqqB family.

Its pathway is cofactor biosynthesis; pyrroloquinoline quinone biosynthesis. May be involved in the transport of PQQ or its precursor to the periplasm. The chain is Coenzyme PQQ synthesis protein B from Pseudomonas savastanoi pv. phaseolicola (strain 1448A / Race 6) (Pseudomonas syringae pv. phaseolicola (strain 1448A / Race 6)).